Reading from the N-terminus, the 929-residue chain is DNA mismatch repair protein MutS (929 aa).

The interval 22 to 46 (PAAPRSTGSAAAPPPSPAVLDDRSG) is disordered. Positions 23–32 (AAPRSTGSAA) are enriched in low complexity. 678 to 685 (GPNMAGKS) provides a ligand contact to ATP.

Belongs to the DNA mismatch repair MutS family.

Functionally, this protein is involved in the repair of mismatches in DNA. It is possible that it carries out the mismatch recognition step. This protein has a weak ATPase activity. This chain is DNA mismatch repair protein MutS, found in Rhodospirillum rubrum (strain ATCC 11170 / ATH 1.1.1 / DSM 467 / LMG 4362 / NCIMB 8255 / S1).